The following is a 517-amino-acid chain: Phospholipase C C (517 aa).

The tat-type signal signal peptide spans 1-39 (MVSQGAFAGMSRRAFLAKAAGAGAAAVLTDWAAPVIEKA).

The protein belongs to the bacterial phospholipase C family. Predicted to be exported by the Tat system. The position of the signal peptide cleavage has not been experimentally proven.

The protein localises to the secreted. It is found in the cell wall. It carries out the reaction a 1,2-diacyl-sn-glycero-3-phosphocholine + H2O = phosphocholine + a 1,2-diacyl-sn-glycerol + H(+). It catalyses the reaction 1,2-dihexadecanoyl-sn-glycero-3-phosphocholine + H2O = 1,2-dihexadecanoyl-sn-glycerol + phosphocholine + H(+). Its function is as follows. Involved in virulence. Induces cytotoxic effects on mouse macrophage cell lines, via direct or indirect enzymatic hydrolysis of cell membrane phospholipids. Hydrolyzes phosphatidylcholine. Does not have hemolytic activity. This Mycobacterium tuberculosis (strain ATCC 25618 / H37Rv) protein is Phospholipase C C.